We begin with the raw amino-acid sequence, 947 residues long: DNA mismatch repair protein MutS 2 (947 aa).

A disordered region spans residues 623–643 (IPNDTHLGSGPVPASRDGSDD). An ATP-binding site is contributed by 659–666 (GPNMSGKS). The disordered stretch occupies residues 841 to 916 (AETADTGVEA…GAAAEDELPE (76 aa)).

This sequence belongs to the DNA mismatch repair MutS family.

Its function is as follows. This protein is involved in the repair of mismatches in DNA. It is possible that it carries out the mismatch recognition step. This protein has a weak ATPase activity. The protein is DNA mismatch repair protein MutS 2 of Haloarcula marismortui (strain ATCC 43049 / DSM 3752 / JCM 8966 / VKM B-1809) (Halobacterium marismortui).